A 292-amino-acid polypeptide reads, in one-letter code: ATP synthase gamma chain (292 aa).

It belongs to the ATPase gamma chain family. F-type ATPases have 2 components, CF(1) - the catalytic core - and CF(0) - the membrane proton channel. CF(1) has five subunits: alpha(3), beta(3), gamma(1), delta(1), epsilon(1). CF(0) has three main subunits: a, b and c.

The protein localises to the cell membrane. Its function is as follows. Produces ATP from ADP in the presence of a proton gradient across the membrane. The gamma chain is believed to be important in regulating ATPase activity and the flow of protons through the CF(0) complex. This Streptococcus suis (strain 05ZYH33) protein is ATP synthase gamma chain.